The primary structure comprises 251 residues: Imidazole glycerol phosphate synthase subunit HisF (251 aa).

Residues aspartate 11 and aspartate 130 contribute to the active site.

It belongs to the HisA/HisF family. Heterodimer of HisH and HisF.

The protein resides in the cytoplasm. The catalysed reaction is 5-[(5-phospho-1-deoxy-D-ribulos-1-ylimino)methylamino]-1-(5-phospho-beta-D-ribosyl)imidazole-4-carboxamide + L-glutamine = D-erythro-1-(imidazol-4-yl)glycerol 3-phosphate + 5-amino-1-(5-phospho-beta-D-ribosyl)imidazole-4-carboxamide + L-glutamate + H(+). It participates in amino-acid biosynthesis; L-histidine biosynthesis; L-histidine from 5-phospho-alpha-D-ribose 1-diphosphate: step 5/9. IGPS catalyzes the conversion of PRFAR and glutamine to IGP, AICAR and glutamate. The HisF subunit catalyzes the cyclization activity that produces IGP and AICAR from PRFAR using the ammonia provided by the HisH subunit. This chain is Imidazole glycerol phosphate synthase subunit HisF, found in Parabacteroides distasonis (strain ATCC 8503 / DSM 20701 / CIP 104284 / JCM 5825 / NCTC 11152).